The sequence spans 192 residues: Probable nicotinate-nucleotide adenylyltransferase (192 aa).

Belongs to the NadD family.

The catalysed reaction is nicotinate beta-D-ribonucleotide + ATP + H(+) = deamido-NAD(+) + diphosphate. The protein operates within cofactor biosynthesis; NAD(+) biosynthesis; deamido-NAD(+) from nicotinate D-ribonucleotide: step 1/1. Its function is as follows. Catalyzes the reversible adenylation of nicotinate mononucleotide (NaMN) to nicotinic acid adenine dinucleotide (NaAD). In Rhizobium etli (strain ATCC 51251 / DSM 11541 / JCM 21823 / NBRC 15573 / CFN 42), this protein is Probable nicotinate-nucleotide adenylyltransferase.